A 385-amino-acid chain; its full sequence is Protein kup-1 (385 aa).

Disordered stretches follow at residues Met1 to Asp20 and Ser326 to Tyr385. 3 stretches are compositionally biased toward basic and acidic residues: residues Gly8–Asp20, Arg339–Val351, and Gly364–Tyr385.

In Caenorhabditis elegans, this protein is Protein kup-1 (kup-1).